Reading from the N-terminus, the 308-residue chain is uncharacterized protein (308 aa).

Residues 43–55 (SQYGTWADQHQNG) are compositionally biased toward polar residues. Residues 43 to 289 (SQYGTWADQH…KEERSEECSP (247 aa)) form a disordered region. The residue at position 62 (Ser62) is a Phosphoserine. A compositionally biased stretch (polar residues) spans 80–90 (HLSSYTESTSV). Basic and acidic residues predominate over residues 91–109 (EQRDSSRDRRSSSVDRSSS). Residues 136–152 (IHQTSVLDSSALKTRVQ) show a composition bias toward polar residues. Residues 153–168 (LSKRSRRRAPISHSLR) show a composition bias toward basic residues. At Ser166 the chain carries Phosphoserine. 2 stretches are compositionally biased toward basic and acidic residues: residues 175 to 186 (SESRSPLEEESH) and 193 to 216 (DSTE…ERTP). 4 positions are modified to phosphoserine: Ser205, Ser259, Ser262, and Ser288.

This is an uncharacterized protein from Mus musculus (Mouse).